We begin with the raw amino-acid sequence, 650 residues long: Acetyl-coenzyme A synthetase (650 aa).

CoA contacts are provided by residues 191-194 (RGGR), Thr-311, and Asn-335. Residues 387 to 389 (GEP), 411 to 416 (DTWWQT), Asp-500, and Arg-515 contribute to the ATP site. Ser-523 contributes to the CoA binding site. Arg-526 is a binding site for ATP. Residues Val-537, His-539, and Val-542 each coordinate Mg(2+). Arg-584 lines the CoA pocket. At Lys-609 the chain carries N6-acetyllysine.

The protein belongs to the ATP-dependent AMP-binding enzyme family. Mg(2+) is required as a cofactor. Post-translationally, acetylated. Deacetylation by the SIR2-homolog deacetylase activates the enzyme.

It catalyses the reaction acetate + ATP + CoA = acetyl-CoA + AMP + diphosphate. Catalyzes the conversion of acetate into acetyl-CoA (AcCoA), an essential intermediate at the junction of anabolic and catabolic pathways. AcsA undergoes a two-step reaction. In the first half reaction, AcsA combines acetate with ATP to form acetyl-adenylate (AcAMP) intermediate. In the second half reaction, it can then transfer the acetyl group from AcAMP to the sulfhydryl group of CoA, forming the product AcCoA. The protein is Acetyl-coenzyme A synthetase of Shewanella putrefaciens (strain CN-32 / ATCC BAA-453).